Reading from the N-terminus, the 202-residue chain is Probable septum site-determining protein MinC (202 aa).

This sequence belongs to the MinC family. Interacts with MinD and FtsZ.

Its function is as follows. Cell division inhibitor that blocks the formation of polar Z ring septums. Rapidly oscillates between the poles of the cell to destabilize FtsZ filaments that have formed before they mature into polar Z rings. Prevents FtsZ polymerization. This is Probable septum site-determining protein MinC from Sulfurihydrogenibium sp. (strain YO3AOP1).